We begin with the raw amino-acid sequence, 101 residues long: Large ribosomal subunit protein uL23 (101 aa).

It belongs to the universal ribosomal protein uL23 family. Part of the 50S ribosomal subunit. Contacts protein L29, and trigger factor when it is bound to the ribosome.

One of the early assembly proteins it binds 23S rRNA. One of the proteins that surrounds the polypeptide exit tunnel on the outside of the ribosome. Forms the main docking site for trigger factor binding to the ribosome. The protein is Large ribosomal subunit protein uL23 of Trichodesmium erythraeum (strain IMS101).